The sequence spans 283 residues: DegV domain-containing protein CPE0304 (283 aa).

The 279-residue stretch at valine 3–arginine 281 folds into the DegV domain. Hexadecanoate is bound by residues serine 60 and serine 92.

May bind long-chain fatty acids, such as palmitate, and may play a role in lipid transport or fatty acid metabolism. The sequence is that of DegV domain-containing protein CPE0304 from Clostridium perfringens (strain 13 / Type A).